Here is a 180-residue protein sequence, read N- to C-terminus: Adenine phosphoribosyltransferase (180 aa).

The protein belongs to the purine/pyrimidine phosphoribosyltransferase family. As to quaternary structure, homodimer.

The protein resides in the cytoplasm. It catalyses the reaction AMP + diphosphate = 5-phospho-alpha-D-ribose 1-diphosphate + adenine. It functions in the pathway purine metabolism; AMP biosynthesis via salvage pathway; AMP from adenine: step 1/1. Catalyzes a salvage reaction resulting in the formation of AMP, that is energically less costly than de novo synthesis. The sequence is that of Adenine phosphoribosyltransferase from Mycolicibacterium smegmatis (strain ATCC 700084 / mc(2)155) (Mycobacterium smegmatis).